A 239-amino-acid chain; its full sequence is Orotidine 5'-phosphate decarboxylase (239 aa).

Residues Asp-12, Lys-34, 61 to 70 (DLKFHDIPNT), Thr-125, Arg-188, Gln-197, Gly-217, and Arg-218 contribute to the substrate site. Residue Lys-63 is the Proton donor of the active site.

The protein belongs to the OMP decarboxylase family. Type 1 subfamily. As to quaternary structure, homodimer.

The catalysed reaction is orotidine 5'-phosphate + H(+) = UMP + CO2. Its pathway is pyrimidine metabolism; UMP biosynthesis via de novo pathway; UMP from orotate: step 2/2. Its function is as follows. Catalyzes the decarboxylation of orotidine 5'-monophosphate (OMP) to uridine 5'-monophosphate (UMP). This is Orotidine 5'-phosphate decarboxylase from Syntrophomonas wolfei subsp. wolfei (strain DSM 2245B / Goettingen).